The primary structure comprises 461 residues: Vitamin K-dependent protein C (461 aa).

Residues 1 to 18 form the signal peptide; that stretch reads MWQFRIFLLFASTWGISG. A propeptide spanning residues 19-41 is cleaved from the precursor; the sequence is VSAHPDPVFSSSEGAHQVLRVRR. Residues 42 to 87 enclose the Gla domain; sequence ANSFLEEVRAGSLERECMEEICDFEEAQEIFQNVEDTLAFWIKYFD. 4-carboxyglutamate occurs at positions 47, 48, 55, 57, 60, 61, 66, 67, 70, and 76. A disulfide bond links Cys58 and Cys63. Disulfide bonds link Cys91/Cys110, Cys100/Cys105, Cys104/Cys119, Cys121/Cys130, Cys139/Cys150, Cys146/Cys159, Cys161/Cys174, Cys182/Cys320, and Cys239/Cys255. 2 EGF-like domains span residues 96 to 131 and 135 to 175; these read LDHQ…RFCQ and GFQD…MHCR. Asp112 is subject to (3R)-3-hydroxyaspartate. In terms of domain architecture, Peptidase S1 spans 213–450; that stretch reads IVNGTLTKQG…YLKWIHSYIG (238 aa). N-linked (GlcNAc...) asparagine glycosylation occurs at Asn215. Catalysis depends on His254, which acts as the Charge relay system. An N-linked (GlcNAc...) asparagine glycan is attached at Asn291. The active-site Charge relay system is the Asp300. A glycan (N-linked (GlcNAc...) asparagine) is linked at Asn355. 2 disulfide bridges follow: Cys373/Cys387 and Cys398/Cys426. Ser402 functions as the Charge relay system in the catalytic mechanism.

The protein belongs to the peptidase S1 family. Synthesized as a single chain precursor, which is cleaved into a light chain and a heavy chain held together by a disulfide bond. The enzyme is then activated by thrombin, which cleaves a tetradecapeptide from the amino end of the heavy chain; this reaction, which occurs at the surface of endothelial cells, is strongly promoted by thrombomodulin. Post-translationally, the vitamin K-dependent, enzymatic carboxylation of some Glu residues allows the modified protein to bind calcium. In terms of processing, the iron and 2-oxoglutarate dependent 3-hydroxylation of aspartate and asparagine is (R) stereospecific within EGF domains. In terms of tissue distribution, plasma; synthesized in the liver.

It localises to the secreted. It is found in the golgi apparatus. The protein localises to the endoplasmic reticulum. The catalysed reaction is Degradation of blood coagulation factors Va and VIIIa.. Functionally, protein C is a vitamin K-dependent serine protease that regulates blood coagulation by inactivating factors Va and VIIIa in the presence of calcium ions and phospholipids. Exerts a protective effect on the endothelial cell barrier function. The polypeptide is Vitamin K-dependent protein C (Proc) (Rattus norvegicus (Rat)).